Reading from the N-terminus, the 339-residue chain is Bifunctional NMN adenylyltransferase/Nudix hydrolase (339 aa).

The segment at 1-183 is NMN adenylyltransferase; sequence MQTKYQYGIY…RYIALCDEYQ (183 aa). The region spanning 199–335 is the Nudix hydrolase domain; that stretch reads PTFITTDAVV…EDHFQIIQHF (137 aa). The Nudix box motif lies at 233–254; that stretch reads GFIKQNETLVEGMLRELKEETR.

It in the N-terminal section; belongs to the archaeal NMN adenylyltransferase family. Requires Mg(2+) as cofactor. It depends on Mn(2+) as a cofactor.

The protein resides in the cytoplasm. It catalyses the reaction beta-nicotinamide D-ribonucleotide + ATP + H(+) = diphosphate + NAD(+). Its pathway is cofactor biosynthesis; NAD(+) biosynthesis; NAD(+) from nicotinamide D-ribonucleotide: step 1/1. The Nudix hydrolase domain is active on ADP-ribose, (2')-phospho-ADP-ribose, IDP-ribose and NADPH. The polypeptide is Bifunctional NMN adenylyltransferase/Nudix hydrolase (Synechocystis sp. (strain ATCC 27184 / PCC 6803 / Kazusa)).